The sequence spans 289 residues: Proteasome assembly chaperone 1 (289 aa).

The segment at M1–V38 is disordered. A2 is subject to N-acetylalanine. Position 18 is a phosphothreonine (T18). Over residues Q27–V38 the composition is skewed to basic and acidic residues. T55 carries the post-translational modification Phosphothreonine. Phosphoserine is present on S181. An N6-acetyllysine modification is found at K265.

Belongs to the PSMG1 family. In terms of assembly, forms a heterodimer with PSMG2. The PSMG1-PSMG2 heterodimer interacts directly with the PSMA5 and PSMA7 proteasome alpha subunits. In terms of processing, degraded by the proteasome upon completion of 20S proteasome maturation. Highly expressed in testis with moderate expression in brain, liver and kidney and low levels in heart, skeletal muscle and pancreas.

It is found in the cytoplasm. The protein localises to the endoplasmic reticulum. In terms of biological role, chaperone protein which promotes assembly of the 20S proteasome as part of a heterodimer with PSMG2. The PSMG1-PSMG2 heterodimer binds to the PSMA5 and PSMA7 proteasome subunits, promotes assembly of the proteasome alpha subunits into the heteroheptameric alpha ring and prevents alpha ring dimerization. The polypeptide is Proteasome assembly chaperone 1 (Mus musculus (Mouse)).